The chain runs to 384 residues: Succinyl-diaminopimelate desuccinylase (384 aa).

His71 is a Zn(2+) binding site. The active site involves Asp73. Asp104 serves as a coordination point for Zn(2+). Glu138 serves as the catalytic Proton acceptor. Glu139, Glu167, and His357 together coordinate Zn(2+).

The protein belongs to the peptidase M20A family. DapE subfamily. Homodimer. Zn(2+) serves as cofactor. Co(2+) is required as a cofactor.

It carries out the reaction N-succinyl-(2S,6S)-2,6-diaminopimelate + H2O = (2S,6S)-2,6-diaminopimelate + succinate. Its pathway is amino-acid biosynthesis; L-lysine biosynthesis via DAP pathway; LL-2,6-diaminopimelate from (S)-tetrahydrodipicolinate (succinylase route): step 3/3. In terms of biological role, catalyzes the hydrolysis of N-succinyl-L,L-diaminopimelic acid (SDAP), forming succinate and LL-2,6-diaminopimelate (DAP), an intermediate involved in the bacterial biosynthesis of lysine and meso-diaminopimelic acid, an essential component of bacterial cell walls. The chain is Succinyl-diaminopimelate desuccinylase from Blochmanniella floridana.